A 338-amino-acid chain; its full sequence is D-erythrose-4-phosphate dehydrogenase (338 aa).

NAD(+) is bound at residue 12–13; the sequence is RI. Substrate is bound by residues 154 to 156, R200, 213 to 214, and R236; these read SCT and TK. The Nucleophile role is filled by C155. Residue N318 participates in NAD(+) binding.

It belongs to the glyceraldehyde-3-phosphate dehydrogenase family. Epd subfamily. Homotetramer.

It is found in the cytoplasm. It catalyses the reaction D-erythrose 4-phosphate + NAD(+) + H2O = 4-phospho-D-erythronate + NADH + 2 H(+). It functions in the pathway cofactor biosynthesis; pyridoxine 5'-phosphate biosynthesis; pyridoxine 5'-phosphate from D-erythrose 4-phosphate: step 1/5. Its function is as follows. Catalyzes the NAD-dependent conversion of D-erythrose 4-phosphate to 4-phosphoerythronate. The sequence is that of D-erythrose-4-phosphate dehydrogenase from Pectobacterium carotovorum subsp. carotovorum (strain PC1).